A 240-amino-acid polypeptide reads, in one-letter code: Coiled-coil domain-containing protein 152 (240 aa).

The stretch at 55-223 (MQTKEVAMKQ…LEQRLSVSKD (169 aa)) forms a coiled coil.

The polypeptide is Coiled-coil domain-containing protein 152 (CCDC152) (Bos taurus (Bovine)).